Consider the following 331-residue polypeptide: Ornithine carbamoyltransferase (331 aa).

Residues Ser55–Thr58, Gln82, Arg106, and His133–Gln136 contribute to the carbamoyl phosphate site. L-ornithine-binding positions include Asn166, Asp230, and Ser234–Met235. Residues Cys272–Leu273 and Arg317 contribute to the carbamoyl phosphate site.

This sequence belongs to the aspartate/ornithine carbamoyltransferase superfamily. OTCase family.

The protein resides in the cytoplasm. The enzyme catalyses carbamoyl phosphate + L-ornithine = L-citrulline + phosphate + H(+). It participates in amino-acid biosynthesis; L-arginine biosynthesis; L-arginine from L-ornithine and carbamoyl phosphate: step 1/3. Functionally, reversibly catalyzes the transfer of the carbamoyl group from carbamoyl phosphate (CP) to the N(epsilon) atom of ornithine (ORN) to produce L-citrulline. This Neisseria meningitidis serogroup C / serotype 2a (strain ATCC 700532 / DSM 15464 / FAM18) protein is Ornithine carbamoyltransferase.